Reading from the N-terminus, the 373-residue chain is MNGNCYKRIVIKLGTSLLTGGTGKLDHERMADLCRQIADLTRLGTEVIIVSSGAIAAGRAKMGLRHIPKDVPFKQVLAAIGQSQLMNYYDQLFSPHGLTVAQGLLTKSDLSDRSGYLNARNTLLALMELGVITIVNENDVVAVDEIQQAKFGDNDNLSAMVANLIEADLLLILTNIRGLYTADPTLHPDARLITEVKEITEELEKLAAGSSNKLGTGGMVTKLEAARLATSSGVNVIIADGHIPDIILKLASGETEGTRFMPSLHKPDSRQRWMMSGLCTRGNICIDDGAVKAIRENQKSLLAAGVQQSEGKFGRGDIVKLSDSRGKRLGYGITNYSSDDVSKIKGLHTDEINTVLAGNQGPEIIHRNNLVVI.

An ATP-binding site is contributed by Lys-12. Ser-52, Asp-139, and Asn-154 together coordinate substrate. Residue Thr-216 to Lys-222 participates in ATP binding. A PUA domain is found at Arg-281–Asn-359.

It belongs to the glutamate 5-kinase family.

It is found in the cytoplasm. It carries out the reaction L-glutamate + ATP = L-glutamyl 5-phosphate + ADP. The protein operates within amino-acid biosynthesis; L-proline biosynthesis; L-glutamate 5-semialdehyde from L-glutamate: step 1/2. Catalyzes the transfer of a phosphate group to glutamate to form L-glutamate 5-phosphate. The chain is Glutamate 5-kinase from Dehalococcoides mccartyi (strain ATCC BAA-2266 / KCTC 15142 / 195) (Dehalococcoides ethenogenes (strain 195)).